The sequence spans 310 residues: 3,5-dioxohexanoate:acetyl-CoA acetone transferase (310 aa).

Zn(2+)-binding residues include H49, H51, and E258.

Belongs to the BKACE family. Zn(2+) is required as a cofactor.

It catalyses the reaction 3,5-dioxohexanoate + acetyl-CoA = acetoacetyl-CoA + acetoacetate. Functionally, catalyzes the condensation of 3,5-dioxohexanoate and acetyl-CoA, forming acetoacetate and acetoacetyl-CoA. May be involved in fatty acid biosynthesis rescue via triacetic acid lactone. The chain is 3,5-dioxohexanoate:acetyl-CoA acetone transferase from Paraburkholderia graminis (strain ATCC 700544 / DSM 17151 / LMG 18924 / NCIMB 13744 / C4D1M).